Reading from the N-terminus, the 502-residue chain is Pentatricopeptide repeat-containing protein At4g01990, mitochondrial (502 aa).

The N-terminal 13 residues, 1-13, are a transit peptide targeting the mitochondrion; the sequence is MMHSVSRLARRFC. PPR repeat units lie at residues 139-173, 174-208, 209-243, 245-275, 280-310, 315-345, and 350-381; these read NQST…NHVS, NSLP…SITP, CDIT…GEGI, SWNT…LENN, VRDC…LKKR, NNSS…WEST, and DMRM…MKKC.

This sequence belongs to the PPR family. P subfamily.

It localises to the mitochondrion. In Arabidopsis thaliana (Mouse-ear cress), this protein is Pentatricopeptide repeat-containing protein At4g01990, mitochondrial.